Reading from the N-terminus, the 398-residue chain is 1-deoxy-D-xylulose 5-phosphate reductoisomerase (398 aa).

The NADPH site is built by T14, G15, S16, I17, Q42, and N128. A 1-deoxy-D-xylulose 5-phosphate-binding site is contributed by K129. Residue E130 coordinates NADPH. D154 is a binding site for Mn(2+). Residues S155, E156, S185, and H208 each contribute to the 1-deoxy-D-xylulose 5-phosphate site. E156 is a Mn(2+) binding site. G214 provides a ligand contact to NADPH. S221, N226, K227, and E230 together coordinate 1-deoxy-D-xylulose 5-phosphate. Residue E230 coordinates Mn(2+).

The protein belongs to the DXR family. The cofactor is Mg(2+). Mn(2+) is required as a cofactor.

It catalyses the reaction 2-C-methyl-D-erythritol 4-phosphate + NADP(+) = 1-deoxy-D-xylulose 5-phosphate + NADPH + H(+). The protein operates within isoprenoid biosynthesis; isopentenyl diphosphate biosynthesis via DXP pathway; isopentenyl diphosphate from 1-deoxy-D-xylulose 5-phosphate: step 1/6. Catalyzes the NADPH-dependent rearrangement and reduction of 1-deoxy-D-xylulose-5-phosphate (DXP) to 2-C-methyl-D-erythritol 4-phosphate (MEP). This Dechloromonas aromatica (strain RCB) protein is 1-deoxy-D-xylulose 5-phosphate reductoisomerase.